The primary structure comprises 35 residues: Cupiennin-2d (35 aa).

Glutamine amide is present on Gln-35.

Expressed by the venom gland.

The protein localises to the secreted. This is Cupiennin-2d from Cupiennius salei (American wandering spider).